A 454-amino-acid polypeptide reads, in one-letter code: tRNA modification GTPase MnmE (454 aa).

Residues Arg23, Glu80, and Lys120 each coordinate (6S)-5-formyl-5,6,7,8-tetrahydrofolate. Positions 216 to 377 (GMKVVIAGRP…LRNHLKQSMG (162 aa)) constitute a TrmE-type G domain. Asn226 is a binding site for K(+). GTP-binding positions include 226-231 (NAGKSS), 245-251 (TDIAGTT), 270-273 (DTAG), 335-338 (NKAD), and 358-360 (SAR). Ser230 is a Mg(2+) binding site. K(+) contacts are provided by Thr245, Ile247, and Thr250. Thr251 serves as a coordination point for Mg(2+). Lys454 provides a ligand contact to (6S)-5-formyl-5,6,7,8-tetrahydrofolate.

The protein belongs to the TRAFAC class TrmE-Era-EngA-EngB-Septin-like GTPase superfamily. TrmE GTPase family. As to quaternary structure, homodimer. Heterotetramer of two MnmE and two MnmG subunits. It depends on K(+) as a cofactor.

It is found in the cytoplasm. In terms of biological role, exhibits a very high intrinsic GTPase hydrolysis rate. Involved in the addition of a carboxymethylaminomethyl (cmnm) group at the wobble position (U34) of certain tRNAs, forming tRNA-cmnm(5)s(2)U34. The sequence is that of tRNA modification GTPase MnmE from Shigella dysenteriae serotype 1 (strain Sd197).